Consider the following 241-residue polypeptide: Purine nucleoside phosphorylase DeoD-type 1 (241 aa).

His-5 lines the a purine D-ribonucleoside pocket. Residues Gly-21, Arg-25, Arg-44, and 88–91 (RVGS) each bind phosphate. A purine D-ribonucleoside-binding positions include 180–182 (EME) and 204–205 (SD). Catalysis depends on Asp-205, which acts as the Proton donor.

This sequence belongs to the PNP/UDP phosphorylase family. As to quaternary structure, homohexamer; trimer of homodimers.

It carries out the reaction a purine D-ribonucleoside + phosphate = a purine nucleobase + alpha-D-ribose 1-phosphate. It catalyses the reaction a purine 2'-deoxy-D-ribonucleoside + phosphate = a purine nucleobase + 2-deoxy-alpha-D-ribose 1-phosphate. Functionally, catalyzes the reversible phosphorolytic breakdown of the N-glycosidic bond in the beta-(deoxy)ribonucleoside molecules, with the formation of the corresponding free purine bases and pentose-1-phosphate. The polypeptide is Purine nucleoside phosphorylase DeoD-type 1 (Vibrio cholerae serotype O1 (strain ATCC 39315 / El Tor Inaba N16961)).